The sequence spans 614 residues: Dihydroxy-acid dehydratase (614 aa).

Aspartate 81 is a binding site for Mg(2+). Cysteine 122 contributes to the [2Fe-2S] cluster binding site. The Mg(2+) site is built by aspartate 123 and lysine 124. Lysine 124 carries the N6-carboxylysine modification. Cysteine 195 is a [2Fe-2S] cluster binding site. Glutamate 491 serves as a coordination point for Mg(2+). Catalysis depends on serine 517, which acts as the Proton acceptor.

This sequence belongs to the IlvD/Edd family. In terms of assembly, homodimer. Requires [2Fe-2S] cluster as cofactor. Mg(2+) serves as cofactor.

The catalysed reaction is (2R)-2,3-dihydroxy-3-methylbutanoate = 3-methyl-2-oxobutanoate + H2O. It catalyses the reaction (2R,3R)-2,3-dihydroxy-3-methylpentanoate = (S)-3-methyl-2-oxopentanoate + H2O. The protein operates within amino-acid biosynthesis; L-isoleucine biosynthesis; L-isoleucine from 2-oxobutanoate: step 3/4. Its pathway is amino-acid biosynthesis; L-valine biosynthesis; L-valine from pyruvate: step 3/4. Its function is as follows. Functions in the biosynthesis of branched-chain amino acids. Catalyzes the dehydration of (2R,3R)-2,3-dihydroxy-3-methylpentanoate (2,3-dihydroxy-3-methylvalerate) into 2-oxo-3-methylpentanoate (2-oxo-3-methylvalerate) and of (2R)-2,3-dihydroxy-3-methylbutanoate (2,3-dihydroxyisovalerate) into 2-oxo-3-methylbutanoate (2-oxoisovalerate), the penultimate precursor to L-isoleucine and L-valine, respectively. In Actinobacillus succinogenes (strain ATCC 55618 / DSM 22257 / CCUG 43843 / 130Z), this protein is Dihydroxy-acid dehydratase.